The sequence spans 334 residues: Protein-methionine-sulfoxide reductase catalytic subunit MsrP (334 aa).

Residues 1–44 constitute a signal peptide (tat-type signal); sequence MKKNQFLKESDVTAESVFFMKRRQVLKALGISAAALSLPHAAHA. Residues asparagine 88, 91–92, cysteine 146, threonine 181, asparagine 233, arginine 238, and 249–251 contribute to the Mo-molybdopterin site; these read YE and GIK.

The protein belongs to the MsrP family. Heterodimer of a catalytic subunit (MsrP) and a heme-binding subunit (MsrQ). The cofactor is Mo-molybdopterin. In terms of processing, predicted to be exported by the Tat system. The position of the signal peptide cleavage has not been experimentally proven.

The protein resides in the periplasm. It carries out the reaction L-methionyl-[protein] + a quinone + H2O = L-methionyl-(S)-S-oxide-[protein] + a quinol. It catalyses the reaction L-methionyl-[protein] + a quinone + H2O = L-methionyl-(R)-S-oxide-[protein] + a quinol. Part of the MsrPQ system that repairs oxidized periplasmic proteins containing methionine sulfoxide residues (Met-O), using respiratory chain electrons. Thus protects these proteins from oxidative-stress damage caused by reactive species of oxygen and chlorine generated by the host defense mechanisms. MsrPQ is essential for the maintenance of envelope integrity under bleach stress, rescuing a wide series of structurally unrelated periplasmic proteins from methionine oxidation, including the primary periplasmic chaperone SurA and the lipoprotein Pal. The catalytic subunit MsrP is non-stereospecific, being able to reduce both (R-) and (S-) diastereoisomers of methionine sulfoxide. This Escherichia coli O9:H4 (strain HS) protein is Protein-methionine-sulfoxide reductase catalytic subunit MsrP.